Reading from the N-terminus, the 167-residue chain is Schlafen-like protein (167 aa).

This sequence belongs to the Schlafen family. Subgroup poxviridae B3 subfamily.

In Bos taurus (Bovine), this protein is Schlafen-like protein.